Reading from the N-terminus, the 275-residue chain is Large ribosomal subunit protein uL2 (275 aa).

Residues 225-275 (MNPVDHPHGGGEGRSPIGRPPVTPWGKPALGTRTRNKKKASSKLIVKRRTK) form a disordered region. The segment covering 258-275 (TRNKKKASSKLIVKRRTK) has biased composition (basic residues).

This sequence belongs to the universal ribosomal protein uL2 family. In terms of assembly, part of the 50S ribosomal subunit. Forms a bridge to the 30S subunit in the 70S ribosome.

Functionally, one of the primary rRNA binding proteins. Required for association of the 30S and 50S subunits to form the 70S ribosome, for tRNA binding and peptide bond formation. It has been suggested to have peptidyltransferase activity; this is somewhat controversial. Makes several contacts with the 16S rRNA in the 70S ribosome. In Desulforudis audaxviator (strain MP104C), this protein is Large ribosomal subunit protein uL2.